We begin with the raw amino-acid sequence, 850 residues long: Serine/threonine-protein phosphatase 6 regulatory subunit 3-B (850 aa).

Disordered stretches follow at residues 610-652 (NISY…VNHE), 683-778 (SDGS…MKET), and 793-850 (KSEE…NGPV). Positions 627-638 (DSEESTDSEEEE) are enriched in acidic residues. Polar residues-rich tracts occupy residues 703–731 (ASFS…TSTE) and 764–778 (DQMT…MKET). Residues 826 to 839 (PSSSSQEQRISEQI) show a composition bias toward low complexity.

This sequence belongs to the SAPS family.

Functionally, regulatory subunit of protein phosphatase 6 (PP6). May function as a scaffolding PP6 subunit. The sequence is that of Serine/threonine-protein phosphatase 6 regulatory subunit 3-B (ppp6r3-b) from Xenopus laevis (African clawed frog).